The primary structure comprises 336 residues: Fructose-1,6-bisphosphatase class 1 (336 aa).

Positions 90, 112, 114, and 115 each coordinate Mg(2+). Substrate is bound by residues 115–118, Asn-207, and Lys-273; that span reads DGSS. Residue Glu-279 coordinates Mg(2+).

It belongs to the FBPase class 1 family. As to quaternary structure, homotetramer. Mg(2+) serves as cofactor.

It localises to the cytoplasm. The enzyme catalyses beta-D-fructose 1,6-bisphosphate + H2O = beta-D-fructose 6-phosphate + phosphate. Its pathway is carbohydrate biosynthesis; gluconeogenesis. The sequence is that of Fructose-1,6-bisphosphatase class 1 from Xanthomonas axonopodis pv. citri (strain 306).